The primary structure comprises 360 residues: Probable L-asparaginase 3 (360 aa).

Positions 1 to 16 (MWSSIISFLFFSVALC) are cleaved as a signal peptide. N-linked (GlcNAc...) asparagine glycosylation is found at asparagine 27, asparagine 35, and asparagine 40. Positions 39-359 (PNVTIFAMGG…QNITDIFSLE (321 aa)) constitute an Asparaginase/glutaminase domain. Threonine 49 serves as the catalytic O-isoaspartyl threonine intermediate. Residue asparagine 82 is glycosylated (N-linked (GlcNAc...) asparagine). Serine 96 is a binding site for substrate. A glycan (N-linked (GlcNAc...) asparagine) is linked at asparagine 106. 129–130 (TD) contacts substrate. Asparagine 144, asparagine 179, asparagine 246, asparagine 302, and asparagine 351 each carry an N-linked (GlcNAc...) asparagine glycan.

This sequence belongs to the asparaginase 1 family.

The protein localises to the secreted. It is found in the cell wall. It catalyses the reaction L-asparagine + H2O = L-aspartate + NH4(+). The polypeptide is Probable L-asparaginase 3 (Schizosaccharomyces pombe (strain 972 / ATCC 24843) (Fission yeast)).